Consider the following 186-residue polypeptide: Pyridoxal 5'-phosphate synthase subunit PdxT (186 aa).

An L-glutamine-binding site is contributed by 46–48 (GES). Cysteine 75 (nucleophile) is an active-site residue. Residues arginine 101 and 128–129 (IR) each bind L-glutamine. Residues histidine 165 and glutamate 167 each act as charge relay system in the active site.

It belongs to the glutaminase PdxT/SNO family. As to quaternary structure, in the presence of PdxS, forms a dodecamer of heterodimers. Only shows activity in the heterodimer.

It carries out the reaction aldehydo-D-ribose 5-phosphate + D-glyceraldehyde 3-phosphate + L-glutamine = pyridoxal 5'-phosphate + L-glutamate + phosphate + 3 H2O + H(+). The enzyme catalyses L-glutamine + H2O = L-glutamate + NH4(+). Its pathway is cofactor biosynthesis; pyridoxal 5'-phosphate biosynthesis. Functionally, catalyzes the hydrolysis of glutamine to glutamate and ammonia as part of the biosynthesis of pyridoxal 5'-phosphate. The resulting ammonia molecule is channeled to the active site of PdxS. In Methanocaldococcus jannaschii (strain ATCC 43067 / DSM 2661 / JAL-1 / JCM 10045 / NBRC 100440) (Methanococcus jannaschii), this protein is Pyridoxal 5'-phosphate synthase subunit PdxT.